Reading from the N-terminus, the 345-residue chain is Tubulin-folding cofactor C (345 aa).

The residue at position 1 (M1) is an N-acetylmethionine. Over residues 1 to 10 (MEDDGQSSVA) the composition is skewed to polar residues. Residues 1 to 83 (MEDDGQSSVA…SRLASSSTDS (83 aa)) are disordered. Residues 23–39 (DMLERLSARHQARKSDS) are compositionally biased toward basic and acidic residues. The span at 40 to 55 (PDSSSSSSSTLESTSS) shows a compositional bias: low complexity. Residues 61 to 73 (SDSKRSIESRIAE) are compositionally biased toward basic and acidic residues. The segment covering 74-83 (SRLASSSTDS) has biased composition (low complexity). The region spanning 169–318 (PPKLVPVRDS…NWANVDDFRW (150 aa)) is the C-CAP/cofactor C-like domain.

It belongs to the TBCC family. In terms of assembly, supercomplex made of cofactors A to E. Cofactors A and D function by capturing and stabilizing tubulin in a quasi-native conformation. Cofactor E binds to the cofactor D-tubulin complex; interaction with cofactor C then causes the release of tubulin polypeptides that are committed to the native state. Ubiquitously expressed (at protein level). Present in leaves, roots, flowers, and stems.

It localises to the cytoplasm. Essential tubulin-folding protein involved in the final step of the tubulin folding pathway. Required for continuous microtubule cytoskeleton organization, mitotic division, cytokinesis, and to couple cell cycle progression to cell division in embryos and endosperms. Not essential for cell viability. Binds probably to the multimeric supercomplex, stimulating GTP hydrolysis by the bound beta-tubulin and the release of the alpha-/beta-tubulin heterodimer. The polypeptide is Tubulin-folding cofactor C (TFCC) (Arabidopsis thaliana (Mouse-ear cress)).